We begin with the raw amino-acid sequence, 90 residues long: 10.1 kDa protein (90 aa).

The polypeptide is 10.1 kDa protein (Pseudomonas aeruginosa (Bacteriophage Pf1)).